The chain runs to 383 residues: Glutamyl-tRNA reductase (383 aa).

Substrate-binding positions include threonine 38–arginine 41, serine 82, glutamate 87–glutamine 89, and glutamine 93. The active-site Nucleophile is the cysteine 39. Glycine 161–alanine 166 is an NADP(+) binding site.

Belongs to the glutamyl-tRNA reductase family. Homodimer.

The catalysed reaction is (S)-4-amino-5-oxopentanoate + tRNA(Glu) + NADP(+) = L-glutamyl-tRNA(Glu) + NADPH + H(+). The protein operates within porphyrin-containing compound metabolism; protoporphyrin-IX biosynthesis; 5-aminolevulinate from L-glutamyl-tRNA(Glu): step 1/2. Catalyzes the NADPH-dependent reduction of glutamyl-tRNA(Glu) to glutamate 1-semialdehyde (GSA). The sequence is that of Glutamyl-tRNA reductase from Methanococcus aeolicus (strain ATCC BAA-1280 / DSM 17508 / OCM 812 / Nankai-3).